Here is a 448-residue protein sequence, read N- to C-terminus: MREIVHIQAGQCGNQVGAAFWSTIADEHGLDSAGIYHGTSEAQHERLNVYFNEAAGGKYVPRAVLVDLEPGTMDAVKSGKFGNLFRPDNIIYGQSGAGNIWAKGHYTEGAELADAVLDVVRREAEACDALQGFQLTHSLGGGTGSGMGTLLLSKIREEYPDRMMATFSVAPAPKSSDTVVEPYNATLSMHQLVENSDETFCIDNEALSSIFANTLKIKSPSYDDLNHLVSAVMAGVTTSFRFPGELNSDLRKLAVNMVPFPRLHFFMVGFAPLAAIGSSSFQAVSVPELTQQMFDANNMMVAADPRHGRYLTVAALFRGKVSMKEVDEQIRSVQTKNSAYFVEWIPDNVLKAVCSVPPKDLKMSATFIGNSTSIQEIFRRLGDQFSAMFRRKAFLHWYTGEGMDEMEFTEAESNMNDLVSEYQQYQEAGIDEGDEDYEIEEEKEPLEY.

GTP is bound by residues glutamine 11, glutamate 69, serine 138, glycine 142, threonine 143, glycine 144, asparagine 204, and asparagine 226. Glutamate 69 provides a ligand contact to Mg(2+). Residues 429–448 form a disordered region; the sequence is GIDEGDEDYEIEEEKEPLEY.

This sequence belongs to the tubulin family. As to quaternary structure, dimer of alpha and beta chains. A typical microtubule is a hollow water-filled tube with an outer diameter of 25 nm and an inner diameter of 15 nM. Alpha-beta heterodimers associate head-to-tail to form protofilaments running lengthwise along the microtubule wall with the beta-tubulin subunit facing the microtubule plus end conferring a structural polarity. Microtubules usually have 13 protofilaments but different protofilament numbers can be found in some organisms and specialized cells. It depends on Mg(2+) as a cofactor.

Its subcellular location is the cytoplasm. The protein resides in the cytoskeleton. In terms of biological role, tubulin is the major constituent of microtubules, a cylinder consisting of laterally associated linear protofilaments composed of alpha- and beta-tubulin heterodimers. Microtubules grow by the addition of GTP-tubulin dimers to the microtubule end, where a stabilizing cap forms. Below the cap, tubulin dimers are in GDP-bound state, owing to GTPase activity of alpha-tubulin. This is Tubulin beta chain (nda3) from Schizosaccharomyces pombe (strain 972 / ATCC 24843) (Fission yeast).